We begin with the raw amino-acid sequence, 177 residues long: Putative adenylate kinase (177 aa).

Gly-10, Gly-12, Lys-13, Thr-14, and Thr-15 together coordinate ATP. Residues 30-50 (NLRDYALEKGIGEMKENELEI) form an NMP region. The interval 99–109 (ERGYGREKLGE) is LID. 2 residues coordinate ATP: Arg-100 and Lys-138.

It belongs to the adenylate kinase family. AK6 subfamily. Interacts with uS11. Not a structural component of 40S pre-ribosomes, but transiently interacts with them by binding to uS11.

The catalysed reaction is AMP + ATP = 2 ADP. The enzyme catalyses ATP + H2O = ADP + phosphate + H(+). In terms of biological role, broad-specificity nucleoside monophosphate (NMP) kinase that catalyzes the reversible transfer of the terminal phosphate group between nucleoside triphosphates and monophosphates. Also has ATPase activity. Involved in the late maturation steps of the 30S ribosomal particles, specifically 16S rRNA maturation. While NMP activity is not required for ribosome maturation, ATPase activity is. Associates transiently with small ribosomal subunit protein uS11. ATP hydrolysis breaks the interaction with uS11. May temporarily remove uS11 from the ribosome to enable a conformational change of the ribosomal RNA that is needed for the final maturation step of the small ribosomal subunit. The polypeptide is Putative adenylate kinase (Thermococcus kodakarensis (strain ATCC BAA-918 / JCM 12380 / KOD1) (Pyrococcus kodakaraensis (strain KOD1))).